Reading from the N-terminus, the 534-residue chain is Light-independent protochlorophyllide reductase subunit B (534 aa).

Asp-36 provides a ligand contact to [4Fe-4S] cluster. Residue Asp-274 is the Proton donor of the active site. A substrate-binding site is contributed by Gly-409–Leu-410. The interval Asp-426 to Asp-446 is disordered.

This sequence belongs to the ChlB/BchB/BchZ family. In terms of assembly, protochlorophyllide reductase is composed of three subunits; BchL, BchN and BchB. Forms a heterotetramer of two BchB and two BchN subunits. Requires [4Fe-4S] cluster as cofactor.

The catalysed reaction is chlorophyllide a + oxidized 2[4Fe-4S]-[ferredoxin] + 2 ADP + 2 phosphate = protochlorophyllide a + reduced 2[4Fe-4S]-[ferredoxin] + 2 ATP + 2 H2O. It participates in porphyrin-containing compound metabolism; bacteriochlorophyll biosynthesis (light-independent). Its function is as follows. Component of the dark-operative protochlorophyllide reductase (DPOR) that uses Mg-ATP and reduced ferredoxin to reduce ring D of protochlorophyllide (Pchlide) to form chlorophyllide a (Chlide). This reaction is light-independent. The NB-protein (BchN-BchB) is the catalytic component of the complex. This Cereibacter sphaeroides (strain ATCC 17023 / DSM 158 / JCM 6121 / CCUG 31486 / LMG 2827 / NBRC 12203 / NCIMB 8253 / ATH 2.4.1.) (Rhodobacter sphaeroides) protein is Light-independent protochlorophyllide reductase subunit B.